The sequence spans 31 residues: Photosystem II reaction center protein T (31 aa).

The helical transmembrane segment at 3–23 (ALVYTFLLVTTLGILFFSIIF) threads the bilayer.

The protein belongs to the PsbT family. PSII is composed of 1 copy each of membrane proteins PsbA, PsbB, PsbC, PsbD, PsbE, PsbF, PsbH, PsbI, PsbJ, PsbK, PsbL, PsbM, PsbT, PsbX, PsbY, PsbZ, Psb30/Ycf12, at least 3 peripheral proteins of the oxygen-evolving complex and a large number of cofactors. It forms dimeric complexes.

The protein resides in the plastid. It is found in the cyanelle thylakoid membrane. Found at the monomer-monomer interface of the photosystem II (PS II) dimer, plays a role in assembly and dimerization of PSII. PSII is a light-driven water plastoquinone oxidoreductase, using light energy to abstract electrons from H(2)O, generating a proton gradient subsequently used for ATP formation. The chain is Photosystem II reaction center protein T from Cyanophora paradoxa.